Reading from the N-terminus, the 209-residue chain is Uracil phosphoribosyltransferase (209 aa).

Residues Arg-79, Arg-104, and 131–139 (DPMLATGHS) each bind 5-phospho-alpha-D-ribose 1-diphosphate. Uracil-binding positions include Ile-194 and 199 to 201 (GDA). Asp-200 contacts 5-phospho-alpha-D-ribose 1-diphosphate.

This sequence belongs to the UPRTase family. Requires Mg(2+) as cofactor.

The catalysed reaction is UMP + diphosphate = 5-phospho-alpha-D-ribose 1-diphosphate + uracil. The protein operates within pyrimidine metabolism; UMP biosynthesis via salvage pathway; UMP from uracil: step 1/1. Its activity is regulated as follows. Allosterically activated by GTP. Functionally, catalyzes the conversion of uracil and 5-phospho-alpha-D-ribose 1-diphosphate (PRPP) to UMP and diphosphate. The sequence is that of Uracil phosphoribosyltransferase from Caulobacter vibrioides (strain ATCC 19089 / CIP 103742 / CB 15) (Caulobacter crescentus).